The primary structure comprises 152 residues: Regulatory protein RecX (152 aa).

This sequence belongs to the RecX family.

It is found in the cytoplasm. Functionally, modulates RecA activity. The protein is Regulatory protein RecX of Haemophilus influenzae (strain PittGG).